A 234-amino-acid polypeptide reads, in one-letter code: Large ribosomal subunit protein uL1 (234 aa).

The protein belongs to the universal ribosomal protein uL1 family. In terms of assembly, part of the 50S ribosomal subunit.

In terms of biological role, binds directly to 23S rRNA. The L1 stalk is quite mobile in the ribosome, and is involved in E site tRNA release. Protein L1 is also a translational repressor protein, it controls the translation of the L11 operon by binding to its mRNA. The sequence is that of Large ribosomal subunit protein uL1 from Anaeromyxobacter sp. (strain Fw109-5).